We begin with the raw amino-acid sequence, 692 residues long: Elongation factor G (692 aa).

In terms of domain architecture, tr-type G spans 8–282; the sequence is ENTRNIGIMA…AVIDYLPSPL (275 aa). GTP-binding positions include 17–24, 81–85, and 135–138; these read AHIDAGKT, DTPGH, and NKMD.

Belongs to the TRAFAC class translation factor GTPase superfamily. Classic translation factor GTPase family. EF-G/EF-2 subfamily.

It localises to the cytoplasm. Its function is as follows. Catalyzes the GTP-dependent ribosomal translocation step during translation elongation. During this step, the ribosome changes from the pre-translocational (PRE) to the post-translocational (POST) state as the newly formed A-site-bound peptidyl-tRNA and P-site-bound deacylated tRNA move to the P and E sites, respectively. Catalyzes the coordinated movement of the two tRNA molecules, the mRNA and conformational changes in the ribosome. The chain is Elongation factor G from Bacillus thuringiensis subsp. konkukian (strain 97-27).